A 264-amino-acid polypeptide reads, in one-letter code: Low molecular mass lipoprotein PBMHP-12 (264 aa).

A signal peptide spans 1–16 (MKLLVVFAMCVPAASA).

This sequence belongs to the 30 kDa lipoprotein family.

Its subcellular location is the secreted. The protein is Low molecular mass lipoprotein PBMHP-12 of Bombyx mori (Silk moth).